The chain runs to 418 residues: Glutamyl-tRNA reductase (418 aa).

Residues 49 to 52, Ser109, 114 to 116, and Gln120 each bind substrate; these read TCNR and EPQ. Cys50 serves as the catalytic Nucleophile. 189-194 lines the NADP(+) pocket; the sequence is GAGETI.

This sequence belongs to the glutamyl-tRNA reductase family. Homodimer.

It catalyses the reaction (S)-4-amino-5-oxopentanoate + tRNA(Glu) + NADP(+) = L-glutamyl-tRNA(Glu) + NADPH + H(+). The protein operates within porphyrin-containing compound metabolism; protoporphyrin-IX biosynthesis; 5-aminolevulinate from L-glutamyl-tRNA(Glu): step 1/2. Functionally, catalyzes the NADPH-dependent reduction of glutamyl-tRNA(Glu) to glutamate 1-semialdehyde (GSA). In Erwinia tasmaniensis (strain DSM 17950 / CFBP 7177 / CIP 109463 / NCPPB 4357 / Et1/99), this protein is Glutamyl-tRNA reductase.